The following is a 186-amino-acid chain: Peptidyl-tRNA hydrolase (186 aa).

Y14 contributes to the tRNA binding site. The Proton acceptor role is filled by H19. Positions 64, 66, and 112 each coordinate tRNA.

The protein belongs to the PTH family. As to quaternary structure, monomer.

The protein resides in the cytoplasm. The catalysed reaction is an N-acyl-L-alpha-aminoacyl-tRNA + H2O = an N-acyl-L-amino acid + a tRNA + H(+). Its function is as follows. Hydrolyzes ribosome-free peptidyl-tRNAs (with 1 or more amino acids incorporated), which drop off the ribosome during protein synthesis, or as a result of ribosome stalling. Catalyzes the release of premature peptidyl moieties from peptidyl-tRNA molecules trapped in stalled 50S ribosomal subunits, and thus maintains levels of free tRNAs and 50S ribosomes. This Listeria monocytogenes serotype 4a (strain HCC23) protein is Peptidyl-tRNA hydrolase.